Here is a 123-residue protein sequence, read N- to C-terminus: MSGLLLICSALKRVVLKITAVVCSVFSIRVLILATKIKKTCHECGTHLEIIWEGKFIFCKEDSKNGLQSIKILRRANLVKMKTPLPFPYHHLIRERKHSWKLNSVLCPNQVISLWYKHNRVKG.

A helical membrane pass occupies residues 14-34; it reads VVLKITAVVCSVFSIRVLILA.

It is found in the membrane. This is an uncharacterized protein from Saccharomyces cerevisiae (strain ATCC 204508 / S288c) (Baker's yeast).